Consider the following 1062-residue polypeptide: MAGKARVHELAKELGVDSKTVLAKLKDLGEFVKSASSTVEAPVVRKLKEAFPADGAPTSPGRATSRPGPPGGGARPTPPSRPGLAPRPGPRPVPGRPGPLGRPGPATPAPSPSPASPPLPASPVQASPVQASPVQASPTSAPAAPRPAAASAVPAPPMPSVPSAPSGPRPGPNAPRPGAPQGGGRPRPGTPVPPSGPTAGGPTAGGPTAGGPTAGGPRPGPRPGPRSAAPGNNPYTTPSAGPRPSAGPRPSAGQSGPPSTPTPRPSAPRSGTPRPGTPRPGGPRPGGTGAGGPRPTPGGMPPRPGGPRSGAGGGMPPRPGGTGGPRPNANMFQPRPAGGPPGRPGGGGAPGRPGGGGAPGRPGGGGGPRPGGFAGRGGAPGRPGGGGGGGGAPGRPGGGGGGGGAPGRPAAGGRGRGGTTAGAFGPGGRGRPGRQRKSKRAKRQEWESGLEAPRMGAMVPRGNGQAIRLPRGASLADFADKIDANPGALVQVVFTQLGEMVTATQSCTDETLQLLGVTLGYEVQIVSPEDEDKELLESFDLSFGGEYGDDVELSSRPPVVTVMGHVDHGKTKLLDAIRSTDVVGGEAGGITQHIGAYQVRAKVDGDERPITFIDTPGHETFTAMRARGAQVTDIVVLVVAADDGVKPQTIEALNHAQAAGVPVVVAVNKVDKEGADPAKVRGQLTEYGLVAEEYGGDTMFVDVSARNRTNIDGLLEAIVLTADASLDLRAPTEVEAQGVAIEGRLDRGRGPVATVLVQRGTLRVGDSVVAGEAFGRVRAMLDEHGGQVVEAGPARPVQVLGFTSVPDAGDNFLVVPEDRVARQIAERRQARERNAELALSRGRPTLETILERMKEGEKTQLNLILKGDVSGSVEALEDALLKIDVGDEVGLRIIDRGVGAITETNVMLASASDAIIIGFNVRPQGKATELADREGVEVRYYSVIYQAIEDIENALKGMLKPVYEEAQLGTAEVREVFRVPRIGNVAGSLVRSGVIRRNTKARLIRDGVVVADNLTVESLKRFKDDATEVREGYECGIGLGSFNDIKIDDVIETFEQREVPRA.

A disordered region spans residues 34–463 (SASSTVEAPV…RMGAMVPRGN (430 aa)). A compositionally biased stretch (pro residues) spans 76-121 (PTPPSRPGLAPRPGPRPVPGRPGPLGRPGPATPAPSPSPASPPLPA). Low complexity predominate over residues 122-153 (SPVQASPVQASPVQASPTSAPAAPRPAAASAV). Pro residues predominate over residues 154 to 178 (PAPPMPSVPSAPSGPRPGPNAPRPG). Residues 198–214 (TAGGPTAGGPTAGGPTA) are compositionally biased toward gly residues. Residues 294 to 305 (RPTPGGMPPRPG) are compositionally biased toward pro residues. 2 stretches are compositionally biased toward gly residues: residues 307–324 (PRSGAGGGMPPRPGGTGG) and 344–430 (PGGG…GGRG). Positions 431-442 (RPGRQRKSKRAK) are enriched in basic residues. The 173-residue stretch at 555 to 727 (SRPPVVTVMG…IVLTADASLD (173 aa)) folds into the tr-type G domain. Residues 564 to 571 (GHVDHGKT) are G1. A GTP-binding site is contributed by 564-571 (GHVDHGKT). The segment at 589–593 (GITQH) is G2. The tract at residues 614–617 (DTPG) is G3. Residues 614-618 (DTPGH) and 668-671 (NKVD) contribute to the GTP site. Residues 668–671 (NKVD) are G4. Residues 704 to 706 (SAR) form a G5 region.

This sequence belongs to the TRAFAC class translation factor GTPase superfamily. Classic translation factor GTPase family. IF-2 subfamily.

It localises to the cytoplasm. Functionally, one of the essential components for the initiation of protein synthesis. Protects formylmethionyl-tRNA from spontaneous hydrolysis and promotes its binding to the 30S ribosomal subunits. Also involved in the hydrolysis of GTP during the formation of the 70S ribosomal complex. This is Translation initiation factor IF-2 from Frankia casuarinae (strain DSM 45818 / CECT 9043 / HFP020203 / CcI3).